The following is a 353-amino-acid chain: Probable protease SohB (353 aa).

The helical transmembrane segment at isoleucine 11 to isoleucine 31 threads the bilayer. The span at glutamine 70–asparagine 84 shows a compositional bias: basic and acidic residues. The disordered stretch occupies residues glutamine 70–lysine 93. Residue serine 181 is the Nucleophile of the active site. The Proton donor/acceptor role is filled by lysine 233.

This sequence belongs to the peptidase S49 family.

The protein localises to the cell membrane. Its function is as follows. Possible protease. The sequence is that of Probable protease SohB (sohB) from Haemophilus influenzae (strain ATCC 51907 / DSM 11121 / KW20 / Rd).